A 496-amino-acid chain; its full sequence is Probable uroporphyrinogen-III C-methyltransferase (496 aa).

It belongs to the precorrin methyltransferase family.

The enzyme catalyses uroporphyrinogen III + 2 S-adenosyl-L-methionine = precorrin-2 + 2 S-adenosyl-L-homocysteine + H(+). Its function is as follows. Siroheme synthase involved in methionine biosynthesis. The sequence is that of Probable uroporphyrinogen-III C-methyltransferase from Schizosaccharomyces pombe (strain 972 / ATCC 24843) (Fission yeast).